The chain runs to 352 residues: Neutral protease 2 (352 aa).

The first 19 residues, 1–19, serve as a signal peptide directing secretion; it reads MRVTTLSTALFALASTAVS. The propeptide occupies 20-175; that stretch reads APTAGSSSPG…TKALSQLTRR (156 aa). Disulfide bonds link cysteine 181-cysteine 253, cysteine 260-cysteine 278, and cysteine 292-cysteine 352. Histidine 303 contributes to the Zn(2+) binding site. Glutamate 304 is a catalytic residue. Positions 307 and 318 each coordinate Zn(2+).

The protein belongs to the peptidase M35 family. Zn(2+) is required as a cofactor.

The enzyme catalyses Preferential cleavage of bonds with hydrophobic residues in P1'. Also 3-Asn-|-Gln-4 and 8-Gly-|-Ser-9 bonds in insulin B chain.. Its function is as follows. Metalloprotease that shows high activities on basic nuclear substrates such as histone and protamine. The protein is Neutral protease 2 of Aspergillus oryzae (strain ATCC 42149 / RIB 40) (Yellow koji mold).